The primary structure comprises 159 residues: Capsid protein (159 aa).

It belongs to the virgaviridae capsid protein family.

The protein resides in the virion. Capsid protein self-assembles to form rod-shaped virions about 18 nm in diameter with a central canal enclosing the viral genomic RNA. This Tobacco mild green mosaic virus (TMGMV) protein is Capsid protein (CP).